Consider the following 694-residue polypeptide: Probable metal-nicotianamine transporter YSL8 (694 aa).

14 helical membrane-spanning segments follow: residues 38-58 (ITVR…FIVM), 62-82 (LTSG…FFLM), 110-130 (CVIS…ILGM), 154-174 (LGRL…SIVP), 215-235 (ILFK…FYAA), 265-285 (VGVG…GSVV), 319-339 (VFIS…SIVL), 393-413 (IAAA…PHIF), 421-441 (VVWA…GTGL), 467-487 (GGVV…STAS), 506-526 (MFVS…MVFW), 567-587 (LRFC…KEVA), 608-628 (FFLG…LFLW), and 643-663 (VASG…ILSL).

It belongs to the YSL (TC 2.A.67.2) family. Expressed in root epidermis and exoderm.

The protein resides in the membrane. Its function is as follows. May be involved in the transport of nicotianamine-chelated metals. This is Probable metal-nicotianamine transporter YSL8 (YSL8) from Oryza sativa subsp. japonica (Rice).